Consider the following 98-residue polypeptide: Hainantoxin-XVII (98 aa).

Positions 1-40 (MTTVGVSLFRRSPEKITMKIATFLGLSFLLIASYVLICEA) are cleaved as a signal peptide. Positions 41-64 (QHPGFQELLILEENMRDPENSKER) are excised as a propeptide. Cystine bridges form between Cys66-Cys81, Cys73-Cys85, and Cys80-Cys95.

Belongs to the hainantoxin family. 17 subfamily. Expressed by the venom gland.

The protein localises to the secreted. Functionally, putative ion channel inhibitor. The chain is Hainantoxin-XVII from Cyriopagopus hainanus (Chinese bird spider).